The following is a 179-amino-acid chain: Large ribosomal subunit protein uL6 (179 aa).

The protein belongs to the universal ribosomal protein uL6 family. In terms of assembly, part of the 50S ribosomal subunit.

In terms of biological role, this protein binds to the 23S rRNA, and is important in its secondary structure. It is located near the subunit interface in the base of the L7/L12 stalk, and near the tRNA binding site of the peptidyltransferase center. The polypeptide is Large ribosomal subunit protein uL6 (Mycobacterium tuberculosis (strain ATCC 25618 / H37Rv)).